An 802-amino-acid polypeptide reads, in one-letter code: MRLLLALLGVLLSVPGPPVLSLEASEEVELEPCLAPSLEQQEQELTVALGQPVRLCCGRAERGGHWYKEGSRLAPAGRVRGWRGRLEIASFLPEDAGRYLCLARGSMIVLQNLTLITGDSLTSSNDDEDPKSHRDPSNRHSYPQQAPYWTHPQRMEKKLHAVPAGNTVKFRCPAAGNPTPTIRWLKDGQAFHGENRIGGIRLRHQHWSLVMESVVPSDRGTYTCLVENAVGSIRYNYLLDVLERSPHRPILQAGLPANTTAVVGSDVELLCKVYSDAQPHIQWLKHIVINGSSFGADGFPYVQVLKTADINSSEVEVLYLRNVSAEDAGEYTCLAGNSIGLSYQSAWLTVLPEEDPTWTAAAPEARYTDIILYASGSLALAVLLLLAGLYRGQALHGRHPRPPATVQKLSRFPLARQFSLESGSSGKSSSSLVRGVRLSSSGPALLAGLVSLDLPLDPLWEFPRDRLVLGKPLGEGCFGQVVRAEAFGMDPARPDQASTVAVKMLKDNASDKDLADLVSEMEVMKLIGRHKNIINLLGVCTQEGPLYVIVECAAKGNLREFLRARRPPGPDLSPDGPRSSEGPLSFPVLVSCAYQVARGMQYLESRKCIHRDLAARNVLVTEDNVMKIADFGLARGVHHIDYYKKTSNGRLPVKWMAPEALFDRVYTHQSDVWSFGILLWEIFTLGGSPYPGIPVEELFSLLREGHRMDRPPHCPPELYGLMRECWHAAPSQRPTFKQLVEALDKVLLAVSEEYLDLRLTFGPYSPSGGDASSTCSSSDSVFSHDPLPLGSSSFPFGSGVQT.

An N-terminal signal peptide occupies residues 1 to 21; the sequence is MRLLLALLGVLLSVPGPPVLS. One can recognise an Ig-like C2-type 1 domain in the interval 22–118; it reads LEASEEVELE…VLQNLTLITG (97 aa). Residues 22 to 369 are Extracellular-facing; the sequence is LEASEEVELE…AAAPEARYTD (348 aa). Cysteines 57 and 101 form a disulfide. Asn-112 carries an N-linked (GlcNAc...) asparagine glycan. The segment at 119–148 is disordered; the sequence is DSLTSSNDDEDPKSHRDPSNRHSYPQQAPY. Ig-like C2-type domains lie at 152–240 and 249–349; these read PQRM…YLLD and PILQ…AWLT. A disulfide bridge connects residues Cys-172 and Cys-224. 4 N-linked (GlcNAc...) asparagine glycosylation sites follow: Asn-258, Asn-290, Asn-311, and Asn-322. Residues Cys-271 and Cys-333 are joined by a disulfide bond. The helical transmembrane segment at 370-390 threads the bilayer; the sequence is IILYASGSLALAVLLLLAGLY. Tyr-390 carries the post-translational modification Phosphotyrosine; in variant R-388. Over 391–802 the chain is Cytoplasmic; the sequence is RGQALHGRHP…SFPFGSGVQT (412 aa). A Protein kinase domain is found at 467 to 755; that stretch reads LVLGKPLGEG…VLLAVSEEYL (289 aa). ATP-binding positions include 473–481 and Lys-503; that span reads LGEGCFGQV. A Phosphoserine modification is found at Ser-573. Residue Asp-612 is the Proton acceptor of the active site. 3 positions are modified to phosphotyrosine; by autocatalysis: Tyr-642, Tyr-643, and Tyr-754.

It belongs to the protein kinase superfamily. Tyr protein kinase family. Fibroblast growth factor receptor subfamily. As to quaternary structure, monomer. Homodimer after ligand binding. Interacts with FGF1, FGF2, FGF4, FGF6, FGF8, FGF9, FGF16, FGF17, FGF18, FGF19, FGF21 and FGF23 (in vitro). Binding affinity for FGF family members is enhanced by interactions between FGFs and heparan sulfate proteoglycans. Interacts with KLB; this strongly increases the affinity for FGF19 and FGF23. Affinity for FGF19 is strongly increased by KLB and sulfated glycosaminoglycans. KLB and KL both interact with the core-glycosylated FGFR4 in the endoplasmic reticulum and promote its degradation, so that only FGFR4 with fully mature N-glycans is expressed at the cell surface. Identified in a complex with NCAM1, CDH2, PLCG1, FRS2, SRC, SHC1, GAP43 and CTTN. Interacts with MMP14 and HIP1. Interacts with STAT3. Post-translationally, N-glycosylated. Full maturation of the glycan chains in the Golgi is essential for high affinity interaction with FGF19. Ubiquitinated. Subject to proteasomal degradation when not fully glycosylated. In terms of processing, autophosphorylated. Binding of FGF family members together with heparan sulfate proteoglycan or heparin promotes receptor dimerization and autophosphorylation on tyrosine residues. Autophosphorylation occurs in trans between the two FGFR molecules present in the dimer. Expressed in gastrointestinal epithelial cells, pancreas, and gastric and pancreatic cancer cell lines.

It localises to the cell membrane. The protein localises to the endosome. Its subcellular location is the endoplasmic reticulum. The protein resides in the secreted. It catalyses the reaction L-tyrosyl-[protein] + ATP = O-phospho-L-tyrosyl-[protein] + ADP + H(+). Present in an inactive conformation in the absence of bound ligand. Ligand binding leads to dimerization and activation by autophosphorylation on tyrosine residues. Tyrosine-protein kinase that acts as a cell-surface receptor for fibroblast growth factors and plays a role in the regulation of cell proliferation, differentiation and migration, and in regulation of lipid metabolism, bile acid biosynthesis, glucose uptake, vitamin D metabolism and phosphate homeostasis. Required for normal down-regulation of the expression of CYP7A1, the rate-limiting enzyme in bile acid synthesis, in response to FGF19. Phosphorylates PLCG1 and FRS2. Ligand binding leads to the activation of several signaling cascades. Activation of PLCG1 leads to the production of the cellular signaling molecules diacylglycerol and inositol 1,4,5-trisphosphate. Phosphorylation of FRS2 triggers recruitment of GRB2, GAB1, PIK3R1 and SOS1, and mediates activation of RAS, MAPK1/ERK2, MAPK3/ERK1 and the MAP kinase signaling pathway, as well as of the AKT1 signaling pathway. Promotes SRC-dependent phosphorylation of the matrix protease MMP14 and its lysosomal degradation. FGFR4 signaling is down-regulated by receptor internalization and degradation; MMP14 promotes internalization and degradation of FGFR4. Mutations that lead to constitutive kinase activation or impair normal FGFR4 inactivation lead to aberrant signaling. In Homo sapiens (Human), this protein is Fibroblast growth factor receptor 4 (FGFR4).